Here is a 1050-residue protein sequence, read N- to C-terminus: MSKFFIDRPIFAWVIALVIMLVGALSILKLPINQYPSIAPPAIAIAVTYPGASAQTVQDTVVQVIEQQLNGIDNLRYVSSESNSDGSMTITATFEQGTNPDTAQVQVQNKLNLATPLLPQEVQQQGIRVTKAVKNFLLVIGLVSEDGSMTKDDLANYIVSNMQDPISRTAGVGDFQVFGAQYAMRIWLDPAKLNKFQLTPVDVKTAVAAQNVQVSSGQLGGLPALPGTQLNATIIGKTRLQTAEQFESILLKVNKDGSQVRLGDVAQVGLGGENYAVSAQFNGKPASGLAVKLATGANALDTAKALRETIKGLEPFFPPGVKAVFPYDTTPVVTESISGVIHTLIEAVVLVFLVMYLFLQNFRATIITTMTVPVVLLGTFGILAAAGFSINTLTMFAMVLAIGLLVDDAIVVVENVERVMSEEGLPPKEATKRSMEQIQGALVGIALVLSAVLLPMAFFGGSTGVIYRQFSITIVSAMGLSVLVALIFTPALCATMLKPLKKGEHHTAKGGFFGWFNRNFDRSVNGYERSVGAILRNKVPFLLAYALIVVGMIWLFARIPTAFLPEEDQGVLFAQVQTPAGSSAERTQVVVDQMREYLLKDEADTVSSVFTVNGFNFAGRGQSSGMAFIMLKPWDERSKENSVFALAQRAQQHFFTFRDAMVFAFAPPAVLELGNATGFDVFLQDRGGVGHEKLMEARNQFLAKAAQSKILSAVRPNGLNDEPQYQLTIDDERASALGVTIADINNTLSIALGASYVNDFIDRGRVKKVYIQGEPSARMSPEDLQKWYVRNGAGEMVPFSSFAKGEWTYGSPKLSRYNGVEAMEILGAPAPGYSTGEAMAEVERIAGELPSGIGFSWTGMSYEEKLSGSQMPALFALSVLFVFLCLAALYESWSIPIAVVLVVPLGIIGALIATSLRGLSNDVYFLVGLLTTIGLAAKNAILIVEFAKELHEQGRSLYDAAIEACRMRLRPIIMTSLAFILGVVPLTIASGAGAGSQHAIGTGVIGGMISATVLAIFWVPLFFVAVSSLFGSKEPEKDVTPENPRYEAGQ.

12 helical membrane passes run 10–30 (IFAW…ILKL), 339–359 (GVIH…YLFL), 370–390 (MTVP…GFSI), 393–413 (LTMF…IVVV), 440–460 (GALV…AFFG), 472–492 (ITIV…TPAL), 539–559 (VPFL…FARI), 871–891 (MPAL…ALYE), 893–913 (WSIP…ALIA), 923–943 (VYFL…AILI), 972–992 (IIMT…ASGA), and 1004–1024 (VIGG…LFFV).

The protein belongs to the resistance-nodulation-cell division (RND) (TC 2.A.6) family.

It localises to the cell inner membrane. Functionally, probable membrane transporter component of the TtgABC efflux pump with unknown specificity. This chain is Probable efflux pump membrane transporter TtgB (ttgB), found in Pseudomonas putida (strain ATCC 47054 / DSM 6125 / CFBP 8728 / NCIMB 11950 / KT2440).